A 274-amino-acid polypeptide reads, in one-letter code: Penicillin-insensitive murein endopeptidase (274 aa).

The signal sequence occupies residues 1–19 (MNKTAIALLALLASSASLA). 3 cysteine pairs are disulfide-bonded: Cys-44–Cys-265, Cys-187–Cys-235, and Cys-216–Cys-223. 6 residues coordinate Zn(2+): His-110, His-113, Asp-120, Asp-147, His-150, and His-211. The segment at 228–274 (LPPSGDGCGAELQSWFEPPKPGTTKPEKKTPPPLPPSCQALLDEHVI) is disordered.

It belongs to the peptidase M74 family. As to quaternary structure, dimer. Requires Zn(2+) as cofactor.

The protein localises to the periplasm. With respect to regulation, inhibited by Zn(2+) at 10 mM and by metal chelating agents EDTA and 1,10-phenanthroline. Functionally, murein endopeptidase that cleaves the D-alanyl-meso-2,6-diamino-pimelyl amide bond that connects peptidoglycan strands. Likely plays a role in the removal of murein from the sacculus and could also play a role in the integration of nascent murein strands into the sacculus. This is Penicillin-insensitive murein endopeptidase (mepA) from Escherichia coli (strain K12).